A 643-amino-acid chain; its full sequence is Ecto-NOX disulfide-thiol exchanger 1 (643 aa).

Positions 142 to 221 (KTVFVGGLPE…GRLHVDFAQA (80 aa)) constitute an RRM domain. Coiled-coil stretches lie at residues 307–342 (VQSA…LTGI) and 425–570 (QAYA…EALL).

Belongs to the ENOX family. The cofactor is Cu cation. As to expression, expressed in lymphocyte cells, breast and breast cancer (at protein level). Found in the sera of cancer patients with a wide variety of cancers including breast, prostate, lung and ovarian cancers, leukemias, and lymphomas. Found also in the serum of healthy volunteers or patients with disorders other than cancer. Probably shed into serum by cancer cells.

It is found in the cell membrane. Its subcellular location is the secreted. The protein localises to the extracellular space. With respect to regulation, not inhibited by the antitumor sulfonylurea LY181984, the vabilloid capsaicin, and retinoids. Functionally, probably acts as a terminal oxidase of plasma electron transport from cytosolic NAD(P)H via hydroquinones to acceptors at the cell surface. Hydroquinone oxidase activity alternates with a protein disulfide-thiol interchange/oxidoreductase activity which may control physical membrane displacements associated with vesicle budding or cell enlargement. The activities oscillate with a period length of 24 minutes and play a role in control of the ultradian cellular biological clock. The chain is Ecto-NOX disulfide-thiol exchanger 1 (ENOX1) from Homo sapiens (Human).